Consider the following 912-residue polypeptide: Isoleucine--tRNA ligase (912 aa).

A 'HIGH' region motif is present at residues 57–67 (PYANGDIHLGT). Glu-549 contacts L-isoleucyl-5'-AMP. The short motif at 590-594 (KMSKS) is the 'KMSKS' region element. ATP is bound at residue Lys-593. Cys-880, Cys-883, Cys-900, and Cys-903 together coordinate Zn(2+).

It belongs to the class-I aminoacyl-tRNA synthetase family. IleS type 1 subfamily. Monomer. Zn(2+) is required as a cofactor.

The protein localises to the cytoplasm. It catalyses the reaction tRNA(Ile) + L-isoleucine + ATP = L-isoleucyl-tRNA(Ile) + AMP + diphosphate. Catalyzes the attachment of isoleucine to tRNA(Ile). As IleRS can inadvertently accommodate and process structurally similar amino acids such as valine, to avoid such errors it has two additional distinct tRNA(Ile)-dependent editing activities. One activity is designated as 'pretransfer' editing and involves the hydrolysis of activated Val-AMP. The other activity is designated 'posttransfer' editing and involves deacylation of mischarged Val-tRNA(Ile). This is Isoleucine--tRNA ligase from Fervidobacterium pennivorans (strain DSM 9078 / Ven5).